A 338-amino-acid chain; its full sequence is Fructose-1,6-bisphosphatase class 1 (338 aa).

4 residues coordinate Mg(2+): Glu91, Asp113, Leu115, and Asp116. Residues 116–119 (DGSS), Asn211, Tyr244, and Lys277 contribute to the substrate site. Residue Glu283 participates in Mg(2+) binding.

This sequence belongs to the FBPase class 1 family. In terms of assembly, homotetramer. It depends on Mg(2+) as a cofactor.

The protein resides in the cytoplasm. It carries out the reaction beta-D-fructose 1,6-bisphosphate + H2O = beta-D-fructose 6-phosphate + phosphate. It participates in carbohydrate biosynthesis; gluconeogenesis. This Oleidesulfovibrio alaskensis (strain ATCC BAA-1058 / DSM 17464 / G20) (Desulfovibrio alaskensis) protein is Fructose-1,6-bisphosphatase class 1.